The primary structure comprises 273 residues: Bis(5'-nucleosyl)-tetraphosphatase, symmetrical (273 aa).

The protein belongs to the Ap4A hydrolase family.

The enzyme catalyses P(1),P(4)-bis(5'-adenosyl) tetraphosphate + H2O = 2 ADP + 2 H(+). Hydrolyzes diadenosine 5',5'''-P1,P4-tetraphosphate to yield ADP. The polypeptide is Bis(5'-nucleosyl)-tetraphosphatase, symmetrical (Aromatoleum aromaticum (strain DSM 19018 / LMG 30748 / EbN1) (Azoarcus sp. (strain EbN1))).